The chain runs to 264 residues: Matrilysin (264 aa).

Positions 1–17 (MQLTLFCFVCLLPGHLA) are cleaved as a signal peptide. A propeptide spans 18-94 (LPLSQEAGDV…PRCGVPDVAE (77 aa)) (activation peptide). A Cysteine switch motif is present at residues 85 to 92 (PRCGVPDV). Position 87 (Cys-87) interacts with Zn(2+). Asp-153 lines the Ca(2+) pocket. Zn(2+) is bound by residues His-163 and Asp-165. Positions 170, 171, 173, and 175 each coordinate Ca(2+). His-178 lines the Zn(2+) pocket. 3 residues coordinate Ca(2+): Gly-185, Gly-187, and Asp-189. A Zn(2+)-binding site is contributed by His-191. Ca(2+) is bound by residues Asp-193 and Glu-196. His-214 is a binding site for Zn(2+). Glu-215 is a catalytic residue. Residues His-218 and His-224 each contribute to the Zn(2+) site.

This sequence belongs to the peptidase M10A family. Ca(2+) is required as a cofactor. It depends on Zn(2+) as a cofactor. In terms of tissue distribution, expressed in the intestinal epithelium (at protein level).

The protein resides in the secreted. It localises to the extracellular space. It is found in the extracellular matrix. It carries out the reaction Cleavage of 14-Ala-|-Leu-15 and 16-Tyr-|-Leu-17 in B chain of insulin. No action on collagen types I, II, IV, V. Cleaves gelatin chain alpha2(I) &gt; alpha1(I).. Degrades casein, gelatins of types I, III, IV, and V, and fibronectin. Activates procollagenase. In terms of biological role, may play a role in tissue reorganization. This Mus musculus (Mouse) protein is Matrilysin (Mmp7).